Here is a 318-residue protein sequence, read N- to C-terminus: Ubiquinol oxidase, mitochondrial (318 aa).

Residues 1–46 constitute a mitochondrion transit peptide; that stretch reads MTVMRGLLNGGRYGNRYIWTAISLRHPEVMEGNGLESAVMQWRRML. A helical membrane pass occupies residues 143–163; the sequence is AMMLETVAAVPGMVGGMLLHL. Residues Glu147, Glu186, and His189 each coordinate Fe cation. Residues 205 to 225 form a helical membrane-spanning segment; it reads LLVLAVQGVFFNSFFVLYVLS. Fe cation is bound by residues Glu237, Glu288, and His291.

The protein belongs to the alternative oxidase family. Homodimer; disulfide-linked. Fe cation serves as cofactor.

The protein localises to the mitochondrion inner membrane. It catalyses the reaction 2 a ubiquinol + O2 = 2 a ubiquinone + 2 H2O. In terms of biological role, catalyzes the cyanide-resistant oxidation of ubiquinol and the reduction of molecular oxygen to water, but does not translocate protons and consequently is not linked to oxidative phosphorylation. May increase respiration when the cytochrome respiratory pathway is restricted, or in response to low temperatures. The sequence is that of Ubiquinol oxidase, mitochondrial (AOMI 1) from Mangifera indica (Mango).